The sequence spans 507 residues: Protein phosphatase 1J (507 aa).

Disordered stretches follow at residues 1–102 and 197–220; these read MLNR…RLPW and LCLP…PQSC. A compositionally biased stretch (low complexity) spans 14-23; that stretch reads SSGGTSSQRS. Thr41 is modified (phosphothreonine). Positions 59–73 are enriched in polar residues; that stretch reads TAETTVSFSRPTFLQ. A phosphoserine mark is found at Ser65 and Ser75. The region spanning 103-499 is the PPM-type phosphatase domain; that stretch reads STGYAEVINA…DDISVFVIPL (397 aa). A compositionally biased stretch (low complexity) spans 199–212; the sequence is LPSTPGTPGAPSPS.

The protein belongs to the PP2C family. Interacts with UBE2I/UBC9. As to expression, specifically expressed in the testicular germ cells.

The catalysed reaction is O-phospho-L-seryl-[protein] + H2O = L-seryl-[protein] + phosphate. The enzyme catalyses O-phospho-L-threonyl-[protein] + H2O = L-threonyl-[protein] + phosphate. The sequence is that of Protein phosphatase 1J (Ppm1j) from Mus musculus (Mouse).